A 455-amino-acid polypeptide reads, in one-letter code: uncharacterized protein (455 aa).

The next 11 helical transmembrane spans lie at 26-46, 53-73, 77-97, 111-131, 146-166, 191-211, 232-252, 256-276, 278-298, 323-343, and 357-377; these read FGPG…QLLI, GAWG…ISIG, LGVM…RSTA, WVVA…LAVI, ALRA…TGVW, AAGV…SLVV, LTVL…AIAV, AHIG…IPAL, ILAA…LIVG, LLVA…GGGG, and ALVL…VVIA. Residues 384–455 are disordered; the sequence is PKRLRPAPPV…LSDEPPPRAD (72 aa).

The protein resides in the cell membrane. This is an uncharacterized protein from Mycobacterium tuberculosis (strain CDC 1551 / Oshkosh).